A 220-amino-acid polypeptide reads, in one-letter code: CRISPR system Cms endoribonuclease Csm3 (220 aa).

The protein belongs to the CRISPR-associated Csm3 family. Part of the Csm effector complex that includes at least Cas10(1), Csm2(3), Csm3(5), Csm4(1), Csm5(1) and mature crRNA. The Csm complex is elongated and slightly twisted with a maximal length of 215 Angstroms and a diameter of 75-80 Angstroms. It has been modeled to have a central protein filamant of Csm3 subunits along which the dsRNA helix of paired crRNA and target RNA binds. The filament is capped at one end by Cas10 and Csm4 and at the other end by Csm5; ssDNA is thought to bind to the N-terminal HD domain of Cas10. Csm with a precursor crRNA does not include Csm5, while Cas6, the enzyme probably involved in pre-crRNA processing, is found associated with a subset of the Csm complex. A metal cation is required as a cofactor.

Its activity is regulated as follows. Target ssRNase is inhibited by EDTA. Functionally, CRISPR (clustered regularly interspaced short palindromic repeat) is an adaptive immune system that provides protection against mobile genetic elements (viruses, transposable elements and conjugative plasmids). CRISPR clusters contain spacers, sequences complementary to antecedent mobile elements, and target invading nucleic acids. CRISPR clusters are transcribed and processed into CRISPR RNA (crRNA). The type III-A Csm effector complex binds crRNA and acts as a crRNA-guided RNase, DNase and cyclic oligoadenylate synthase; binding of target RNA cognate to the crRNA is required for all activities. In a heterologous host this Csm effector complex restricts ssRNA phage MS2, suggesting it may target RNA viruses in vivo. In terms of biological role, csm functions as a non-specific ssDNase. Base-pairing between crRNA and target RNA to form a ternary Csm complex activates a ssDNase activity; target RNA cleavage suppresses the ssDNase, a temporal control that prevents uncontrolled DNA degradation. Viral RNA transcripts probably tether the Csm complex to the viral genome, recruiting Cas10 ssDNA activity which is able to degrade DNA in the transcription bubble, spatially controlling the DNase activity. This subunit has the target ssRNA endonuclease activity; it cleaves multiple sites in the target RNA at 6 nucleotide intervals. The number of cleavage sites in the target RNA correlates with the number of Csm3 subunits in the Csm effector complex. In the Csm complex target RNA and ssDNA are cleaved simultaneously, although RNase activity (of Csm3) is much faster. RNA cleavage by Csm3 is not required for ssDNase activity as Csm complex with inactive Csm3 still has ssDNase activity; however as the cleaved target RNA products dissociate away ssDNase activity decreases. This chain is CRISPR system Cms endoribonuclease Csm3, found in Streptococcus thermophilus.